The following is a 461-amino-acid chain: Fumarate hydratase class II (461 aa).

Residues 97-99, 127-130, 137-139, and Thr-185 each bind substrate; these read SGT, HPND, and SSN. His-186 serves as the catalytic Proton donor/acceptor. The active site involves Ser-316. Residues Ser-317 and 322–324 contribute to the substrate site; that span reads KVN.

The protein belongs to the class-II fumarase/aspartase family. Fumarase subfamily. Homotetramer.

The protein resides in the cytoplasm. It carries out the reaction (S)-malate = fumarate + H2O. It functions in the pathway carbohydrate metabolism; tricarboxylic acid cycle; (S)-malate from fumarate: step 1/1. Involved in the TCA cycle. Catalyzes the stereospecific interconversion of fumarate to L-malate. The protein is Fumarate hydratase class II of Oceanobacillus iheyensis (strain DSM 14371 / CIP 107618 / JCM 11309 / KCTC 3954 / HTE831).